The following is an 827-amino-acid chain: Glycerol-3-phosphate acyltransferase (827 aa).

Positions 309–314 (CHRSHI) match the HXXXXD motif motif.

The protein belongs to the GPAT/DAPAT family.

The protein resides in the cell inner membrane. It carries out the reaction sn-glycerol 3-phosphate + an acyl-CoA = a 1-acyl-sn-glycero-3-phosphate + CoA. It functions in the pathway phospholipid metabolism; CDP-diacylglycerol biosynthesis; CDP-diacylglycerol from sn-glycerol 3-phosphate: step 1/3. The protein is Glycerol-3-phosphate acyltransferase of Ectopseudomonas mendocina (strain ymp) (Pseudomonas mendocina).